Here is a 66-residue protein sequence, read N- to C-terminus: Small ribosomal subunit protein bS21 (66 aa).

This sequence belongs to the bacterial ribosomal protein bS21 family.

This Rickettsia akari (strain Hartford) protein is Small ribosomal subunit protein bS21.